Here is a 208-residue protein sequence, read N- to C-terminus: Small ribosomal subunit protein uS5 (208 aa).

Polar residues predominate over residues 1-15 (MTDSNNQSPNKKTSG). Residues 1 to 54 (MTDSNNQSPNKKTSGSSSAPPAADGRQENRRSRGEKRGGRRDRRGQERDSEWQE) are disordered. Basic and acidic residues-rich tracts occupy residues 25 to 37 (GRQENRRSRGEKR) and 44 to 54 (RGQERDSEWQE). The region spanning 52–115 (WQERVVQIRR…ADGKKHLVRV (64 aa)) is the S5 DRBM domain.

Belongs to the universal ribosomal protein uS5 family. Part of the 30S ribosomal subunit. Contacts proteins S4 and S8.

With S4 and S12 plays an important role in translational accuracy. Functionally, located at the back of the 30S subunit body where it stabilizes the conformation of the head with respect to the body. The polypeptide is Small ribosomal subunit protein uS5 (Prochlorococcus marinus (strain NATL2A)).